The primary structure comprises 1025 residues: Multidrug resistance protein MdtC (1025 aa).

Helical transmembrane passes span 3–23 (FFAL…AITL), 333–353 (EVEQ…FLFL), 360–380 (IIPA…MYLC), 387–407 (LSLM…IVVL), 431–451 (VGFT…PLLL), 463–483 (FAVT…TLTP), 528–548 (LVGV…ISIP), 853–873 (VILI…LYES), 875–895 (VHPL…LLAL), 897–917 (LFNA…IGIV), 953–973 (PIMM…LSGG), and 984–1004 (ITIV…TPVV).

It belongs to the resistance-nodulation-cell division (RND) (TC 2.A.6) family. MdtC subfamily. In terms of assembly, part of a tripartite efflux system composed of MdtA, MdtB and MdtC. MdtC forms a heteromultimer with MdtB.

The protein resides in the cell inner membrane. Functionally, the MdtABC tripartite complex confers resistance against novobiocin and deoxycholate. The protein is Multidrug resistance protein MdtC of Escherichia coli (strain SMS-3-5 / SECEC).